The sequence spans 122 residues: Urease subunit beta (122 aa).

This sequence belongs to the urease beta subunit family. Heterotrimer of UreA (gamma), UreB (beta) and UreC (alpha) subunits. Three heterotrimers associate to form the active enzyme.

The protein resides in the cytoplasm. It catalyses the reaction urea + 2 H2O + H(+) = hydrogencarbonate + 2 NH4(+). It functions in the pathway nitrogen metabolism; urea degradation; CO(2) and NH(3) from urea (urease route): step 1/1. This is Urease subunit beta from Flavobacterium johnsoniae (strain ATCC 17061 / DSM 2064 / JCM 8514 / BCRC 14874 / CCUG 350202 / NBRC 14942 / NCIMB 11054 / UW101) (Cytophaga johnsonae).